The chain runs to 315 residues: Olfactory receptor 4A8 (315 aa).

Residues 1-24 are Extracellular-facing; the sequence is MRQNNNITEFVLLGFSQYPDVQNA. The N-linked (GlcNAc...) asparagine glycan is linked to asparagine 6. The helical transmembrane segment at 25–45 threads the bilayer; sequence LFVMFLLIYIVTMVGNLLIVV. The Cytoplasmic portion of the chain corresponds to 46–57; it reads SIIASPFLGSPV. The helical transmembrane segment at 58-80 threads the bilayer; that stretch reads YFFLACLSFIDAVYSTTISPVLI. At 81–95 the chain is on the extracellular side; that stretch reads VDLLCDKKTISFPAC. A disulfide bridge connects residues cysteine 95 and cysteine 177. Residues 96–116 form a helical membrane-spanning segment; that stretch reads MGQLFIEHLFGDTDVFLLVVM. Residues 117-139 lie on the Cytoplasmic side of the membrane; it reads AYDRYVATCKPLRYLTIMNRQVC. The helical transmembrane segment at 140-160 threads the bilayer; the sequence is ILLLVVAVTGGFLHSVFQILV. The Extracellular segment spans residues 161-193; the sequence is VYSLPFCGPNVIYHFFCNIYPLLDLECTDTYFV. The helical transmembrane segment at 194 to 214 threads the bilayer; that stretch reads GLAVVFNGGAICMVIFTLLLI. The Cytoplasmic segment spans residues 215–235; sequence SYGVILNSLKTYSPEGRHKAP. Residues 236–256 traverse the membrane as a helical segment; the sequence is FICSSHFIMVILFFVPCIFLY. At 257-266 the chain is on the extracellular side; sequence VRPVSNFPID. The helical transmembrane segment at 267–287 threads the bilayer; the sequence is KFLTVFYSVITPKLNPFIYML. At 288 to 315 the chain is on the cytoplasmic side; sequence RNSEMRNAIENLLGYQSGKTGFRCSKLN.

Belongs to the G-protein coupled receptor 1 family.

The protein localises to the cell membrane. Odorant receptor. This is Olfactory receptor 4A8 (OR4A8) from Homo sapiens (Human).